The sequence spans 412 residues: Cinnamoyl-CoA:phenyllactate CoA-transferase (412 aa).

Asparagine 102 provides a ligand contact to CoA. Aspartate 176 acts as the Nucleophile in catalysis.

Homodimer. Part of the heterotrimeric phenyllactate dehydratase complex FldABC, composed of (R)-phenyllactate CoA-transferase (FldA) and a heterodimeric (R)-phenyllactyl-CoA dehydratase (FldB and FldC).

The enzyme catalyses (E)-cinnamoyl-CoA + (R)-3-phenyllactate = (R)-3-phenyllactoyl-CoA + (E)-cinnamate. Its pathway is amino-acid degradation; L-phenylalanine degradation. In terms of biological role, component of the phenyllactate dehydratase complex FldABC that is involved in the fermentation of L-phenylalanine via a Stickland reaction. This complex catalyzes the reversible syn-dehydration of (R)-phenyllactate to (E)-cinnamate in two steps, a CoA-transfer from cinnamoyl-CoA to phenyllactate, catalyzed by FldA, followed by the dehydration of phenyllactyl-CoA to cinnamoyl-CoA, catalyzed by FldB and FldC. In vitro, FldA can use 3-phenylpropanoate as a better CoA-acceptor than phenyllactate. The chain is Cinnamoyl-CoA:phenyllactate CoA-transferase from Clostridium sporogenes.